The sequence spans 517 residues: Ubiquitin carboxyl-terminal hydrolase 30 (517 aa).

Residues 1–35 (MLSSRAEAAMTAADRAIQRFLRTGAAVRYKVMKNW) are Mitochondrial intermembrane-facing. A helical membrane pass occupies residues 36 to 56 (GVIGGIAAALAAGIYVIWGPI). At 57–517 (TERKKRRKGL…HQSQECKSEE (461 aa)) the chain is on the cytoplasmic side. The region spanning 68–502 (PGLVNLGNTC…SAYLLFYERV (435 aa)) is the USP domain. Cys77 (nucleophile) is an active-site residue. Glycyl lysine isopeptide (Lys-Gly) (interchain with G-Cter in ubiquitin) cross-links involve residues Lys235 and Lys289. The disordered stretch occupies residues 364-395 (SQHNPKLNKNPGPTLELQDGPGAPTPVLNQPG). His452 serves as the catalytic Proton acceptor.

This sequence belongs to the peptidase C19 family. In terms of processing, ubiquitinated by parkin (PRKN) at Lys-235 and Lys-289, leading to its degradation. As to expression, expressed in skeletal muscle, pancreas, liver and kidney.

It localises to the mitochondrion outer membrane. It catalyses the reaction Thiol-dependent hydrolysis of ester, thioester, amide, peptide and isopeptide bonds formed by the C-terminal Gly of ubiquitin (a 76-residue protein attached to proteins as an intracellular targeting signal).. Its activity is regulated as follows. Inhibited by the diterpenoid derivative 15-oxospiramilactone (S3). Functionally, deubiquitinating enzyme tethered to the mitochondrial outer membrane that acts as a key inhibitor of mitophagy by counteracting the action of parkin (PRKN): hydrolyzes ubiquitin attached by parkin on target proteins, such as RHOT1/MIRO1 and TOMM20, thereby blocking parkin's ability to drive mitophagy. Preferentially cleaves 'Lys-6'- and 'Lys-11'-linked polyubiquitin chains, 2 types of linkage that participate in mitophagic signaling. Does not cleave efficiently polyubiquitin phosphorylated at 'Ser-65'. Acts as a negative regulator of mitochondrial fusion by mediating deubiquitination of MFN1 and MFN2. The chain is Ubiquitin carboxyl-terminal hydrolase 30 from Homo sapiens (Human).